The primary structure comprises 141 residues: Large ribosomal subunit protein uL11 (141 aa).

It belongs to the universal ribosomal protein uL11 family. In terms of assembly, part of the ribosomal stalk of the 50S ribosomal subunit. Interacts with L10 and the large rRNA to form the base of the stalk. L10 forms an elongated spine to which L12 dimers bind in a sequential fashion forming a multimeric L10(L12)X complex. One or more lysine residues are methylated.

In terms of biological role, forms part of the ribosomal stalk which helps the ribosome interact with GTP-bound translation factors. This is Large ribosomal subunit protein uL11 from Roseobacter denitrificans (strain ATCC 33942 / OCh 114) (Erythrobacter sp. (strain OCh 114)).